A 351-amino-acid polypeptide reads, in one-letter code: MAKHKLSKGQQRRVRENHQRRLKKQDNKPEMDDNQLGEPQEGLVISRFGQHADVEAEDGSTQRCNIRRTIRSLVTGDRVVWRPSLQTQADVKVNGIVEAVHERTSVLTRPDYYDGIKPIAANIDQIVIVSAILPELSLNIIDRYLVACETLGIEPLIVLNKIDLLDEESRAWVNEIMSTYHNIGYRVLKLSSHTGEGMEELTKMLAGRITIFAGQSGVGKSSLLNTLLPEDEEEILVNQVSDVSGLGQHTTTASRLYHFPHGGDVIDSPGVREFGLWHLTSEQVTQGFVEFRDYLGGCKFRDCKHRDDPACALRKAVEDNEINQERFENYHRILDSMDQIKPRKTFTDNDS.

The segment covering 1 to 12 (MAKHKLSKGQQR) has biased composition (basic residues). Positions 1–37 (MAKHKLSKGQQRRVRENHQRRLKKQDNKPEMDDNQLG) are disordered. Positions 13-31 (RVRENHQRRLKKQDNKPEM) are enriched in basic and acidic residues. In terms of domain architecture, CP-type G spans 112 to 274 (YYDGIKPIAA…VIDSPGVREF (163 aa)). GTP is bound by residues 160–163 (NKID) and 214–222 (GQSGVGKSS). The Zn(2+) site is built by Cys298, Cys303, His305, and Cys311.

It belongs to the TRAFAC class YlqF/YawG GTPase family. RsgA subfamily. As to quaternary structure, monomer. Associates with 30S ribosomal subunit, binds 16S rRNA. Zn(2+) is required as a cofactor.

It is found in the cytoplasm. Its function is as follows. One of several proteins that assist in the late maturation steps of the functional core of the 30S ribosomal subunit. Helps release RbfA from mature subunits. May play a role in the assembly of ribosomal proteins into the subunit. Circularly permuted GTPase that catalyzes slow GTP hydrolysis, GTPase activity is stimulated by the 30S ribosomal subunit. This chain is Small ribosomal subunit biogenesis GTPase RsgA, found in Photorhabdus laumondii subsp. laumondii (strain DSM 15139 / CIP 105565 / TT01) (Photorhabdus luminescens subsp. laumondii).